Reading from the N-terminus, the 298-residue chain is Protease HtpX homolog (298 aa).

2 helical membrane passes run 15 to 35 and 38 to 58; these read LIMV…GYLF and SPWT…LIMW. Residue H143 coordinates Zn(2+). E144 is a catalytic residue. H147 lines the Zn(2+) pocket. The next 2 helical transmembrane spans lie at 153–173 and 197–217; these read ILLS…SGIA and IIFK…SASL. Residue E227 participates in Zn(2+) binding.

This sequence belongs to the peptidase M48B family. The cofactor is Zn(2+).

It is found in the cell membrane. This is Protease HtpX homolog from Lactobacillus acidophilus (strain ATCC 700396 / NCK56 / N2 / NCFM).